We begin with the raw amino-acid sequence, 338 residues long: DNA-directed RNA polymerase subunit alpha (338 aa).

The interval 1-234 (MIHKNWAELI…DQLGIFVNFE (234 aa)) is alpha N-terminal domain (alpha-NTD). Residues 250 to 338 (FNPLLLKKVD…DLAKKFEDSF (89 aa)) are alpha C-terminal domain (alpha-CTD).

The protein belongs to the RNA polymerase alpha chain family. As to quaternary structure, homodimer. The RNAP catalytic core consists of 2 alpha, 1 beta, 1 beta' and 1 omega subunit. When a sigma factor is associated with the core the holoenzyme is formed, which can initiate transcription.

The enzyme catalyses RNA(n) + a ribonucleoside 5'-triphosphate = RNA(n+1) + diphosphate. In terms of biological role, DNA-dependent RNA polymerase catalyzes the transcription of DNA into RNA using the four ribonucleoside triphosphates as substrates. In Roseobacter denitrificans (strain ATCC 33942 / OCh 114) (Erythrobacter sp. (strain OCh 114)), this protein is DNA-directed RNA polymerase subunit alpha.